A 258-amino-acid polypeptide reads, in one-letter code: Short-chain dehydrogenase/reductase FrzI (258 aa).

Positions 21, 41, and 94 each coordinate NADP(+). Active-site proton donor residues include Ser143 and Ser144. NADP(+) contacts are provided by Tyr157, Lys161, Val191, and Thr193. The active-site Proton acceptor is the Tyr157. Lys161 acts as the Lowers pKa of active site Tyr in catalysis.

This sequence belongs to the short-chain dehydrogenases/reductases (SDR) family.

The catalysed reaction is (1S,3S,6S,7S,8R)-7-hydroxy-6-[(4-methoxyphenyl)methyl]-3-(methylamino)-5-azatricyclo[6.3.1.0(1,5)]dodecan-9-one + NADPH + H(+) = (1S,3S,6S,7S,8S,9S)-6-[(4-methoxyphenyl)methyl]-3-(methylamino)-5-azatricyclo[6.3.1.0(1,5)]dodecane-7,9-diol + NADP(+). It participates in secondary metabolite biosynthesis. Short-chain dehydrogenase/reductase; part of the gene cluster that mediates the biosynthesis of the alkaloid (-)-FR901483, a potent immunosuppressant that shows efficacy in animal models and a probable inhibitor of purine nucleotide biosynthesis by targeting phosphoribosylpyrophosphate amidotransferase (PPAT). Within the pathway, FrzI catalyzes the formation of dephospho-(-)-FR901483 from the aza-tricyclic intermediate produced by FrzH. The biosynthesis of (-)-FR901483 starts with the condensation of two L-tyrosines to yield (S,S)-dityrosyl-piperazine. This process occurs in 3 steps with the non-canonical nonribosomal peptide synthetase FrzA catalyzing the reduction of L-tyrosine into L-tyrosinal, the spontaneous condensation of 2 L-tyrosinal units, and the subsequent reduction by the NmrA-like family domain-containing oxidoreductase FrzB. The cytochrome P450 monooxygenase FrzC then performs coupling between N10 and C1' to morph the piperazine into a 1,4-diazabicyclo[3.2.1]octane spiro-fused to a 2,5-cyclohexadienone. The dienone portion is further reduced to cyclohexanone by the flavin-dependent reductase FrzD. The methyltranserases (MTs) FrzE and FrzF are then involved in the methylation at the C10' amine and the C4 phenolic oxygen, respectively. The order of the two MTs appear to be interchangeable. Cleavage of the C9-N10' bond by the dioxygenase FrzG then leads to formation of a conjugated iminium. In addition to the oxidation of C9, an additional dehydrogenation between C7 and C8 can occur to give a likely shunt product. The next biosynthetic step is the intramolecular aldol condensation catalyzed by the newly identified aldolase FrzH to yield an aza-tricyclic product with the formation of a C9-C3' bond. The short-chain dehydrogenase/reductase FrzI then produces dephospho-(-)-FR901483 that is phosphorylated at C4'-OH into (-)-FR901483 by the phosphotransferase FrzJ. This is Short-chain dehydrogenase/reductase FrzI from Cladobotryum sp.